Consider the following 151-residue polypeptide: Probable cGMP 3',5'-cyclic phosphodiesterase subunit delta (151 aa).

The protein belongs to the PDE6D/unc-119 family. As to quaternary structure, interacts with Pde6.

It localises to the nucleus. The protein localises to the cytoplasm. In Drosophila willistoni (Fruit fly), this protein is Probable cGMP 3',5'-cyclic phosphodiesterase subunit delta.